Here is a 71-residue protein sequence, read N- to C-terminus: uncharacterized protein (71 aa).

The first 26 residues, 1–26, serve as a signal peptide directing secretion; it reads MIKFSVILGMIRCSLTHITTKNTVNA.

This is an uncharacterized protein from Bacillus subtilis (strain 168).